A 336-amino-acid chain; its full sequence is Glucan endo-1,3-beta-glucosidase A (336 aa).

Residues 1-23 (MAFLSSLLASLLLVGLLIQITGA) form the signal peptide. The residue at position 24 (Gln-24) is a Pyrrolidone carboxylic acid. The Proton donor role is filled by Glu-118. Glu-257 acts as the Nucleophile in catalysis.

The protein belongs to the glycosyl hydrolase 17 family.

It localises to the secreted. Its subcellular location is the extracellular space. The catalysed reaction is Hydrolysis of (1-&gt;3)-beta-D-glucosidic linkages in (1-&gt;3)-beta-D-glucans.. Functionally, implicated in the defense of plants against pathogens. The polypeptide is Glucan endo-1,3-beta-glucosidase A (Solanum lycopersicum (Tomato)).